The primary structure comprises 356 residues: D-alanine--D-alanine ligase (356 aa).

One can recognise an ATP-grasp domain in the interval 134–339; that stretch reads KQLFEHRGLP…YPELITKLIE (206 aa). 167–222 is a binding site for ATP; the sequence is NDKLNYPVFVKPANLGSSIGISKCSNEVELKEGIKEAFQFDRKLVIEQGVNAREIE. 3 residues coordinate Mg(2+): Asp293, Glu306, and Asn308.

It belongs to the D-alanine--D-alanine ligase family. It depends on Mg(2+) as a cofactor. Mn(2+) is required as a cofactor.

The protein resides in the cytoplasm. It catalyses the reaction 2 D-alanine + ATP = D-alanyl-D-alanine + ADP + phosphate + H(+). It functions in the pathway cell wall biogenesis; peptidoglycan biosynthesis. Its function is as follows. Cell wall formation. In Staphylococcus aureus (strain MRSA252), this protein is D-alanine--D-alanine ligase.